The following is a 306-amino-acid chain: D-alanine--D-alanine ligase (306 aa).

In terms of domain architecture, ATP-grasp spans 102 to 300 (KIVVASVGVS…YGDIVQWMVE (199 aa)). 128 to 183 (PMEPPYVIKPVCEGSSLGVIIVKENESVPSLNVVGSEWVYADTVIVEKYIPGRELT) is a binding site for ATP. Mg(2+)-binding residues include Asp253, Glu267, and Asn269.

Belongs to the D-alanine--D-alanine ligase family. Mg(2+) serves as cofactor. Requires Mn(2+) as cofactor.

It is found in the cytoplasm. The catalysed reaction is 2 D-alanine + ATP = D-alanyl-D-alanine + ADP + phosphate + H(+). It functions in the pathway cell wall biogenesis; peptidoglycan biosynthesis. Functionally, cell wall formation. In Bartonella henselae (strain ATCC 49882 / DSM 28221 / CCUG 30454 / Houston 1) (Rochalimaea henselae), this protein is D-alanine--D-alanine ligase.